We begin with the raw amino-acid sequence, 310 residues long: Methionyl-tRNA formyltransferase (310 aa).

Residue 109 to 112 (SLLP) coordinates (6S)-5,6,7,8-tetrahydrofolate.

Belongs to the Fmt family.

The catalysed reaction is L-methionyl-tRNA(fMet) + (6R)-10-formyltetrahydrofolate = N-formyl-L-methionyl-tRNA(fMet) + (6S)-5,6,7,8-tetrahydrofolate + H(+). Functionally, attaches a formyl group to the free amino group of methionyl-tRNA(fMet). The formyl group appears to play a dual role in the initiator identity of N-formylmethionyl-tRNA by promoting its recognition by IF2 and preventing the misappropriation of this tRNA by the elongation apparatus. This is Methionyl-tRNA formyltransferase from Pseudomonas entomophila (strain L48).